The chain runs to 300 residues: Bifunctional protein FolD 2 (300 aa).

NADP(+) is bound by residues 165 to 167 (GRS), Ser-190, and Ile-231.

It belongs to the tetrahydrofolate dehydrogenase/cyclohydrolase family. In terms of assembly, homodimer.

It carries out the reaction (6R)-5,10-methylene-5,6,7,8-tetrahydrofolate + NADP(+) = (6R)-5,10-methenyltetrahydrofolate + NADPH. The catalysed reaction is (6R)-5,10-methenyltetrahydrofolate + H2O = (6R)-10-formyltetrahydrofolate + H(+). It participates in one-carbon metabolism; tetrahydrofolate interconversion. Catalyzes the oxidation of 5,10-methylenetetrahydrofolate to 5,10-methenyltetrahydrofolate and then the hydrolysis of 5,10-methenyltetrahydrofolate to 10-formyltetrahydrofolate. The polypeptide is Bifunctional protein FolD 2 (Pseudomonas savastanoi pv. phaseolicola (strain 1448A / Race 6) (Pseudomonas syringae pv. phaseolicola (strain 1448A / Race 6))).